Here is a 784-residue protein sequence, read N- to C-terminus: LPS-assembly protein LptD (784 aa).

An N-terminal signal peptide occupies residues 1–24; sequence MKKRIPTLLATMIASALYSHQGLA. Intrachain disulfides connect Cys-31/Cys-724 and Cys-173/Cys-725.

Belongs to the LptD family. In terms of assembly, component of the lipopolysaccharide transport and assembly complex. Interacts with LptE and LptA. Contains two intramolecular disulfide bonds.

It localises to the cell outer membrane. Functionally, together with LptE, is involved in the assembly of lipopolysaccharide (LPS) at the surface of the outer membrane. This chain is LPS-assembly protein LptD, found in Salmonella typhi.